The following is a 208-amino-acid chain: Methionine-R-sulfoxide reductase B1 (208 aa).

Residues 27 to 36 are compositionally biased toward basic and acidic residues; that stretch reads QDSDNPDKRY. A disordered region spans residues 27-48; it reads QDSDNPDKRYSGPAATMDNKSE. The 135-residue stretch at 54 to 188 folds into the MsrB domain; the sequence is KEELRKRLTP…NSASIEFVNA (135 aa). Residues Cys93, Cys96, Cys154, and Cys157 each contribute to the Zn(2+) site. Cysteines 111 and 177 form a disulfide. Cys177 acts as the Nucleophile in catalysis. Positions 189–208 are disordered; it reads DPATSSPPVATPTAAPIAQQ.

The protein belongs to the MsrB Met sulfoxide reductase family. Zn(2+) serves as cofactor. In terms of tissue distribution, present in the embryonic nervous system (brain and cord) in neuronal cell bodies, along axons. Also present in embryonic muscles in motor axons. Localizes to growing bristle tips where it is distributed in small puntae. Present at and at sites of actin localization.

The protein localises to the cytoplasm. It localises to the nucleus. It is found in the cytoskeleton. It carries out the reaction L-methionyl-[protein] + [thioredoxin]-disulfide + H2O = L-methionyl-(R)-S-oxide-[protein] + [thioredoxin]-dithiol. In terms of biological role, methionine-sulfoxide reductase that specifically reduces methionine (R)-sulfoxide back to methionine. While in many cases methionine oxidation is the result of random oxidation following oxidative stress, methionine oxidation is also a post-translational modification that takes place on specific residues. Acts as a regulator of actin assembly by reducing methionine (R)-sulfoxide mediated by Mical on actin thereby promoting filament repolymerization. The protein is Methionine-R-sulfoxide reductase B1 (SelR) of Drosophila melanogaster (Fruit fly).